The following is an 824-amino-acid chain: Disintegrin and metalloproteinase domain-containing protein 8 (824 aa).

The first 16 residues, Met1–Ala16, serve as a signal peptide directing secretion. Topologically, residues Ile17–Pro655 are extracellular. 2 N-linked (GlcNAc...) asparagine glycosylation sites follow: Asn67 and Asn91. A Peptidase M12B domain is found at Arg200–Pro400. Intrachain disulfides connect Cys310/Cys395, Cys351/Cys379, Cys353/Cys362, Cys435/Cys457, Cys448/Cys454, Cys466/Cys486, Cys473/Cys503, Cys498/Cys508, Cys566/Cys613, Cys613/Cys623, Cys617/Cys629, and Cys631/Cys640. His334 serves as a coordination point for Zn(2+). The active site involves Glu335. 2 residues coordinate Zn(2+): His338 and His344. Positions Gly408–Asn494 constitute a Disintegrin domain. N-linked (GlcNAc...) asparagine glycosylation is present at Asn436. The EGF-like domain maps to Arg609 to Ala641. A glycan (N-linked (GlcNAc...) asparagine) is linked at Asn612. A helical transmembrane segment spans residues Val656–Ile676. At Val677–Pro824 the chain is on the cytoplasmic side. Disordered regions lie at residues Val710–Val756 and Lys776–Pro824. The span at Arg747 to Val756 shows a compositional bias: pro residues. Positions Pro788–Pro804 are enriched in low complexity.

In terms of assembly, interacts with FST3. It depends on Zn(2+) as a cofactor. In terms of tissue distribution, expressed on neutrophils and monocytes.

The protein resides in the membrane. Possible involvement in extravasation of leukocytes. This Homo sapiens (Human) protein is Disintegrin and metalloproteinase domain-containing protein 8 (ADAM8).